We begin with the raw amino-acid sequence, 160 residues long: MAIQILVNLILSVFWLFVTGSYNFNNFILGYLFALLLVYIMRGVLPGRFYLITVYKIIKLFLVFLIELIKANIDVIRIVVKPNIDNEPAFFTYNTDLKKDWQIVLLSNLITLTPGTIVLGISDDRTKIYIHSIDFSTKEEEVESIKSSLEKVVREVGENE.

Helical transmembrane passes span 1–21 (MAIQ…VTGS), 27–47 (FILG…VLPG), 49–69 (FYLI…IELI), and 101–121 (WQIV…VLGI).

This sequence belongs to the CPA3 antiporters (TC 2.A.63) subunit E family. As to quaternary structure, may form a heterooligomeric complex that consists of seven subunits: mnhA1, mnhB1, mnhC1, mnhD1, mnhE1, mnhF1 and mnhG1.

It localises to the cell membrane. Its function is as follows. Mnh complex is a Na(+)/H(+) antiporter involved in Na(+) excretion. This is Na(+)/H(+) antiporter subunit E1 (mnhE1) from Staphylococcus saprophyticus subsp. saprophyticus (strain ATCC 15305 / DSM 20229 / NCIMB 8711 / NCTC 7292 / S-41).